The sequence spans 619 residues: Transcription factor 7-like 2 (619 aa).

Gly residues predominate over residues 1–11; it reads MPQLNGGGGDD. A CTNNB1-binding region spans residues 1-53; the sequence is MPQLNGGGGDDLGANDELISFKDEGEQEEKSSENSSAERDLADVKSSLVNESE. The interval 1–96 is disordered; the sequence is MPQLNGGGGD…AKRQDGGLFK (96 aa). Positions 19 to 43 are enriched in basic and acidic residues; it reads ISFKDEGEQEEKSSENSSAERDLAD. Residue lysine 22 forms a Glycyl lysine isopeptide (Lys-Gly) (interchain with G-Cter in SUMO2) linkage. Residues 47-57 are compositionally biased toward polar residues; the sequence is SLVNESETNQN. Residues 63–91 show a composition bias toward basic and acidic residues; the sequence is EAERRPPPRSESFRDKSRESLEEAAKRQD. Residues threonine 201 and threonine 212 each carry the phosphothreonine; by NLK modification. Positions 201-395 are mediates interaction with MAD2L2; it reads TPLITYSNEH…RRWHALSREE (195 aa). The segment covering 318 to 328 has biased composition (polar residues); that stretch reads TVKQESSQSDV. Disordered regions lie at residues 318-350, 420-441, 496-547, and 574-619; these read TVKQ…KPHI, RDNY…TNEH, CLSP…AHLS, and DLPP…KSLE. Lysine 320 participates in a covalent cross-link: Glycyl lysine isopeptide (Lys-Gly) (interchain with G-Cter in SUMO). Residues 335–346 show a composition bias toward basic and acidic residues; sequence KHQDSKKEEEKK. Positions 350–418 form a DNA-binding region, HMG box; that stretch reads IKKPLNAFML…LHMQLYPGWS (69 aa). A Nuclear localization signal motif is present at residues 425–430; the sequence is KKKKRK. The promoter-specific activation domain stretch occupies residues 459–505; it reads SAPKKCRARFGLDQQNNWCGPCRRKKKCVRYIQGEGSCLSPPSSDGS. Low complexity predominate over residues 496–508; the sequence is CLSPPSSDGSLLD. Lysine 539 participates in a covalent cross-link: Glycyl lysine isopeptide (Lys-Gly) (interchain with G-Cter in SUMO2). A compositionally biased stretch (low complexity) spans 574 to 603; sequence DLPPAALQPAAPSSSIAQPSTSSLHSHSSL. Polar residues predominate over residues 604–619; it reads AGTQPQPLSLVTKSLE.

It belongs to the TCF/LEF family. As to quaternary structure, interacts with TGFB1I1. Interacts with CTNNB1 (via the armadillo repeat); forms stable transcription complex. Interacts with EP300. Interacts with NLK. Interacts with CCDC85B (probably through the HMG box); prevents interaction with CTNNB1. Interacts with TNIK. Interacts with MAD2L2; prevents TCF7L2/TCF4 binding to promZIPK/DAPK3oters, negatively modulating its transcriptional activity. Interacts with ZIPK/DAPK3. Interacts with XIAP/BIRC4 and TLE3. Interacts with DDIT3/CHOP. The CTNNB1 and TCF7L2/TCF4 complex interacts with PML (isoform PML-4). Identified in a complex with CTNNB1 and FERMT2. Interacts with SPIN1. Interacts with C11orf84/SPINDOC in a SPIN1-dependent manner. Interacts with DAZAP2; the interaction results in localization of DAZAP2 to the nucleus. In terms of processing, in vitro, phosphorylated by TNIK. Post-translationally, phosphorylated at Thr-201 and/or Thr-212 by NLK. Phosphorylation by NLK at these sites inhibits DNA-binding by TCF7L2/TCF4, thereby preventing transcriptional activation of target genes of the canonical Wnt/beta-catenin signaling pathway. Polysumoylated. Sumoylation is enhanced by PIAS family members and desumoylation is enhanced by SENP2. Sumoylation/desumoylation regulates TCF7L2/TCF4 transcription activity in the Wnt/beta-catenin signaling pathway without altering interaction with CTNNB1 nor binding to DNA. In terms of tissue distribution, detected in epithelium from small intestine, with the highest expression at the top of the crypts and a gradient of expression from crypt to villus. Detected in colon epithelium and colon cancer, and in epithelium from mammary gland and carcinomas derived therefrom.

It is found in the nucleus. Its subcellular location is the PML body. Participates in the Wnt signaling pathway and modulates MYC expression by binding to its promoter in a sequence-specific manner. Acts as a repressor in the absence of CTNNB1, and as activator in its presence. Activates transcription from promoters with several copies of the Tcf motif 5'-CCTTTGATC-3' in the presence of CTNNB1. TLE1, TLE2, TLE3 and TLE4 repress transactivation mediated by TCF7L2/TCF4 and CTNNB1. Expression of dominant-negative mutants results in cell-cycle arrest in G1. Necessary for the maintenance of the epithelial stem-cell compartment of the small intestine. The polypeptide is Transcription factor 7-like 2 (TCF7L2) (Homo sapiens (Human)).